Here is a 341-residue protein sequence, read N- to C-terminus: Pyrophosphate--fructose 6-phosphate 1-phosphotransferase (341 aa).

G10 is a binding site for diphosphate. E103 is a Mg(2+) binding site. Substrate contacts are provided by residues 125 to 127, R162, 169 to 171, E221, R265, and 271 to 274; these read TID, MGR, and HTQR. The active-site Proton acceptor is the D127.

Belongs to the phosphofructokinase type A (PFKA) family. Mixed-substrate PFK group III subfamily. As to quaternary structure, homotetramer. Mg(2+) serves as cofactor.

It is found in the cytoplasm. It catalyses the reaction beta-D-fructose 6-phosphate + diphosphate = beta-D-fructose 1,6-bisphosphate + phosphate + H(+). Its pathway is carbohydrate degradation; glycolysis; D-glyceraldehyde 3-phosphate and glycerone phosphate from D-glucose: step 3/4. Non-allosteric. In terms of biological role, catalyzes the phosphorylation of D-fructose 6-phosphate, the first committing step of glycolysis. Uses inorganic phosphate (PPi) as phosphoryl donor instead of ATP like common ATP-dependent phosphofructokinases (ATP-PFKs), which renders the reaction reversible, and can thus function both in glycolysis and gluconeogenesis. Consistently, PPi-PFK can replace the enzymes of both the forward (ATP-PFK) and reverse (fructose-bisphosphatase (FBPase)) reactions. This chain is Pyrophosphate--fructose 6-phosphate 1-phosphotransferase, found in Amycolatopsis methanolica.